Reading from the N-terminus, the 104-residue chain is N(4)-acetylcytidine amidohydrolase (104 aa).

An ASCH domain is found at 7 to 93 (MTFFSRFEAD…EVIQEIYPGI (87 aa)). K22 acts as the Proton acceptor in catalysis. The active-site Nucleophile is the T25. E75 (proton donor) is an active-site residue.

Belongs to the N(4)-acetylcytidine amidohydrolase family.

It catalyses the reaction N(4)-acetylcytidine + H2O = cytidine + acetate + H(+). The catalysed reaction is N(4)-acetyl-2'-deoxycytidine + H2O = 2'-deoxycytidine + acetate + H(+). It carries out the reaction N(4)-acetylcytosine + H2O = cytosine + acetate + H(+). In terms of biological role, catalyzes the hydrolysis of N(4)-acetylcytidine (ac4C). The polypeptide is N(4)-acetylcytidine amidohydrolase (Vibrio vulnificus (strain YJ016)).